We begin with the raw amino-acid sequence, 1135 residues long: Envelopment polyprotein (1135 aa).

Positions 1-35 are cleaved as a signal peptide; it reads MRILKLLELVVKVSLFTIALSSVLLAFLTFRATDA. At 36-314 the chain is on the lumenal side; that stretch reads KVEIIRGDHP…KYSKSIYKQT (279 aa). Positions 41 to 43 match the Cell attachment site motif; it reads RGD. A glycan (N-linked (GlcNAc...) asparagine; by host) is linked at Asn-116. Cysteines 122 and 156 form a disulfide. Residues 177-195 form a non-covalent dimerization region; it reads LDNKRHFSVGTNFFIPESL. N-linked (GlcNAc...) asparagine; by host glycosylation occurs at Asn-210. Cys-224 and Cys-285 are disulfide-bonded. The chain crosses the membrane as a helical span at residues 315–366; it reads ACINFSWIRLILIALLIYFPIRWLVNKTTKPLFLWYDLMGLITYPVLLLINC. The Cytoplasmic segment spans residues 367-484; it reads LWKYFPFKCS…VPGCPFLVTS (118 aa). The interval 437–484 is signal for signal peptide peptidase; sequence LSLSLLKFVTEILIGLVILSQIPMSMAQTTQCLSGCFYVPGCPFLVTS. Residues 485 to 1067 are Lumenal-facing; it reads KFEKCPEKDQ…YFGSFFDTIR (583 aa). Asn-588, Asn-605, and Asn-980 each carry an N-linked (GlcNAc...) asparagine; by host glycan. A helical transmembrane segment spans residues 1068-1088; that stretch reads VVLLIAFIFLVIYFCSILTSI. The Cytoplasmic portion of the chain corresponds to 1089–1135; it reads CKGYVKHKSYKSRSKIEDDDEPEIKAPMLMKDTMTRRRPPMDFSHLV.

This sequence belongs to the tospovirus envelope glycoprotein family. In terms of assembly, homodimer; disulfide-linked. Heterodimer with Glycoprotein C. Interacts with nucleoprotein. As to quaternary structure, heterodimer with Glycoprotein N. Interacts with nucleoprotein. Specific enzymatic cleavages in vivo yield mature proteins including Glycoprotein N and Glycoprotein C. In terms of processing, glycosylated with O-linked glycans. Glycosylation is essential for proper subcellular location. Post-translationally, cleaved at acidic pH.

It is found in the virion membrane. The protein resides in the host Golgi apparatus membrane. The protein localises to the host endoplasmic reticulum membrane. Functionally, forms the spikes present at the surface of the virion together with Glycoprotein C. They are able to attach the virion to a cell receptor and to promote fusion of membranes after endocytosis of the virion. Plays a role in virus binding and/or entry into the vector midgut. Its function is as follows. Forms the spikes present at the surface of the virion together with Glycoprotein N. They are able to attach the virion to a cell receptor and to promote fusion of membranes after endocytosis of the virion. Probable class II fusion protein. The polypeptide is Envelopment polyprotein (GP) (Frankliniella occidentalis (Western flower thrips)).